A 759-amino-acid polypeptide reads, in one-letter code: Phosphoribosylformylglycinamidine synthase subunit PurL (759 aa).

Residue histidine 61 is part of the active site. 2 residues coordinate ATP: tyrosine 64 and lysine 105. Glutamate 107 contacts Mg(2+). Substrate-binding positions include 108 to 111 (SHNH) and arginine 130. Histidine 109 functions as the Proton acceptor in the catalytic mechanism. Residue aspartate 131 participates in Mg(2+) binding. Residue glutamine 260 coordinates substrate. Aspartate 288 contacts Mg(2+). Residue 332-334 (ESQ) coordinates substrate. ATP is bound by residues aspartate 520 and glycine 557. Mg(2+) is bound at residue asparagine 558. Position 560 (serine 560) interacts with substrate.

This sequence belongs to the FGAMS family. In terms of assembly, monomer. Part of the FGAM synthase complex composed of 1 PurL, 1 PurQ and 2 PurS subunits.

The protein localises to the cytoplasm. It catalyses the reaction N(2)-formyl-N(1)-(5-phospho-beta-D-ribosyl)glycinamide + L-glutamine + ATP + H2O = 2-formamido-N(1)-(5-O-phospho-beta-D-ribosyl)acetamidine + L-glutamate + ADP + phosphate + H(+). It participates in purine metabolism; IMP biosynthesis via de novo pathway; 5-amino-1-(5-phospho-D-ribosyl)imidazole from N(2)-formyl-N(1)-(5-phospho-D-ribosyl)glycinamide: step 1/2. In terms of biological role, part of the phosphoribosylformylglycinamidine synthase complex involved in the purines biosynthetic pathway. Catalyzes the ATP-dependent conversion of formylglycinamide ribonucleotide (FGAR) and glutamine to yield formylglycinamidine ribonucleotide (FGAM) and glutamate. The FGAM synthase complex is composed of three subunits. PurQ produces an ammonia molecule by converting glutamine to glutamate. PurL transfers the ammonia molecule to FGAR to form FGAM in an ATP-dependent manner. PurS interacts with PurQ and PurL and is thought to assist in the transfer of the ammonia molecule from PurQ to PurL. In Thermoplasma volcanium (strain ATCC 51530 / DSM 4299 / JCM 9571 / NBRC 15438 / GSS1), this protein is Phosphoribosylformylglycinamidine synthase subunit PurL.